Here is a 932-residue protein sequence, read N- to C-terminus: 2-oxoglutarate dehydrogenase E1 component (932 aa).

It belongs to the alpha-ketoglutarate dehydrogenase family. As to quaternary structure, homodimer. Part of the 2-oxoglutarate dehydrogenase (OGDH) complex composed of E1 (2-oxoglutarate dehydrogenase), E2 (dihydrolipoamide succinyltransferase) and E3 (dihydrolipoamide dehydrogenase); the complex contains multiple copies of the three enzymatic components (E1, E2 and E3). The cofactor is thiamine diphosphate.

The enzyme catalyses N(6)-[(R)-lipoyl]-L-lysyl-[protein] + 2-oxoglutarate + H(+) = N(6)-[(R)-S(8)-succinyldihydrolipoyl]-L-lysyl-[protein] + CO2. In terms of biological role, E1 component of the 2-oxoglutarate dehydrogenase (OGDH) complex which catalyzes the decarboxylation of 2-oxoglutarate, the first step in the conversion of 2-oxoglutarate to succinyl-CoA and CO(2). This is 2-oxoglutarate dehydrogenase E1 component from Staphylococcus aureus (strain MW2).